The chain runs to 167 residues: MAKEQQVQANDLQEKLIAVNRVSKTVKGGRIMSFTALTVVGDGNGRVGFGYGKAREVPAAIQKAMEKARRNMTTIALNEGTLHHPVKGRHSGSKVYMQPAAEGTGVIAGGAMRAVLEVAGVHNVLSKAYGSTNPINIVRATIDALGSMKSPEMVAAKRGLTVEAISE.

Residues 12-75 (LQEKLIAVNR…EKARRNMTTI (64 aa)) enclose the S5 DRBM domain.

Belongs to the universal ribosomal protein uS5 family. Part of the 30S ribosomal subunit. Contacts proteins S4 and S8.

Functionally, with S4 and S12 plays an important role in translational accuracy. In terms of biological role, located at the back of the 30S subunit body where it stabilizes the conformation of the head with respect to the body. This Vibrio parahaemolyticus serotype O3:K6 (strain RIMD 2210633) protein is Small ribosomal subunit protein uS5.